A 459-amino-acid chain; its full sequence is 2-(3-amino-3-carboxypropyl)histidine synthase subunit 1 (459 aa).

A disordered region spans residues 1–68; it reads MEDDRAQVDL…AGANTSIEDS (68 aa). Residues 41–61 are compositionally biased toward low complexity; that stretch reads SAAAGKSSSSSSNSTSQPAGA. 3 residues coordinate [4Fe-4S] cluster: Cys165, Cys268, and Cys403.

It belongs to the DPH1/DPH2 family. DPH1 subfamily. As to quaternary structure, component of the 2-(3-amino-3-carboxypropyl)histidine synthase complex composed of dph-1, dph-2, dph-3 and a NADH-dependent reductase, predominantly cbr-1. [4Fe-4S] cluster serves as cofactor.

Its subcellular location is the cytoplasm. The catalysed reaction is L-histidyl-[translation elongation factor 2] + S-adenosyl-L-methionine = 2-[(3S)-amino-3-carboxypropyl]-L-histidyl-[translation elongation factor 2] + S-methyl-5'-thioadenosine + H(+). It participates in protein modification; peptidyl-diphthamide biosynthesis. Functionally, catalyzes the first step of diphthamide biosynthesis, a post-translational modification of histidine which occurs in elongation factor 2. Dph-1 and dph-2 transfer a 3-amino-3-carboxypropyl (ACP) group from S-adenosyl-L-methionine (SAM) to a histidine residue, the reaction is assisted by a reduction system comprising dph-3 and a NADH-dependent reductase, predominantly cbr-1. This is 2-(3-amino-3-carboxypropyl)histidine synthase subunit 1 (dph-1) from Neurospora crassa (strain ATCC 24698 / 74-OR23-1A / CBS 708.71 / DSM 1257 / FGSC 987).